Reading from the N-terminus, the 357-residue chain is GTPase Obg (357 aa).

Positions 1–158 (MFVDNIKLKV…LEIVLELKLI (158 aa)) constitute an Obg domain. One can recognise an OBG-type G domain in the interval 159-345 (ADVGLVGFPN…LKFALFDLVE (187 aa)). Residues 165–172 (GFPNAGKS), 190–194 (FTTLT), 212–215 (DIPG), 280–283 (TKCD), and 326–328 (SSV) each bind GTP. Residues Ser-172 and Thr-192 each contribute to the Mg(2+) site.

Belongs to the TRAFAC class OBG-HflX-like GTPase superfamily. OBG GTPase family. In terms of assembly, monomer. The cofactor is Mg(2+).

The protein resides in the cytoplasm. In terms of biological role, an essential GTPase which binds GTP, GDP and possibly (p)ppGpp with moderate affinity, with high nucleotide exchange rates and a fairly low GTP hydrolysis rate. Plays a role in control of the cell cycle, stress response, ribosome biogenesis and in those bacteria that undergo differentiation, in morphogenesis control. This Nautilia profundicola (strain ATCC BAA-1463 / DSM 18972 / AmH) protein is GTPase Obg.